A 170-amino-acid chain; its full sequence is Flavodoxin (170 aa).

In terms of domain architecture, Flavodoxin-like spans isoleucine 4–lysine 165.

This sequence belongs to the flavodoxin family. The cofactor is FMN.

Functionally, low-potential electron donor to a number of redox enzymes. This chain is Flavodoxin (isiB), found in Picosynechococcus sp. (strain ATCC 27264 / PCC 7002 / PR-6) (Agmenellum quadruplicatum).